The chain runs to 465 residues: Iron-sulfur cluster assembly SufBD family protein SSP1857 (465 aa).

It belongs to the iron-sulfur cluster assembly SufBD family.

This chain is Iron-sulfur cluster assembly SufBD family protein SSP1857, found in Staphylococcus saprophyticus subsp. saprophyticus (strain ATCC 15305 / DSM 20229 / NCIMB 8711 / NCTC 7292 / S-41).